Consider the following 153-residue polypeptide: SsrA-binding protein (153 aa).

It belongs to the SmpB family.

It is found in the cytoplasm. Its function is as follows. Required for rescue of stalled ribosomes mediated by trans-translation. Binds to transfer-messenger RNA (tmRNA), required for stable association of tmRNA with ribosomes. tmRNA and SmpB together mimic tRNA shape, replacing the anticodon stem-loop with SmpB. tmRNA is encoded by the ssrA gene; the 2 termini fold to resemble tRNA(Ala) and it encodes a 'tag peptide', a short internal open reading frame. During trans-translation Ala-aminoacylated tmRNA acts like a tRNA, entering the A-site of stalled ribosomes, displacing the stalled mRNA. The ribosome then switches to translate the ORF on the tmRNA; the nascent peptide is terminated with the 'tag peptide' encoded by the tmRNA and targeted for degradation. The ribosome is freed to recommence translation, which seems to be the essential function of trans-translation. The sequence is that of SsrA-binding protein from Paramagnetospirillum magneticum (strain ATCC 700264 / AMB-1) (Magnetospirillum magneticum).